A 435-amino-acid chain; its full sequence is MLDSKLLRAELDETAAKLARRGFPLDVETIRELEEKRKSLQMKTEELQALRNSRSKSIGQAKAKGDHEEAERILAEVGNLGAELDQAKVTLAELQSELETITMSIPNLPDAEVPDGKDEDDNVEVSRWGQPKTYDFEVKDHVDLGEMSGGLDFASAVKISGSRFIVMKGKFARLHRAIAQFMLDLHTDEHGYTEMYVPYLVNHDSLYGTGQLPKFGEDLFHTSPLTEQVSDVPLKTLSLIPTAEVPVTNMVRDTITDEAELPLKMTAHTPCFRSEAGSYGRDTRGLIRMHQFDKVELVQITKPEDSMAALEELTGHAEKVLQLLELPYRKVILCTGDMGFGSAKTYDLEVWVPAQETYREISSCSNMWDFQARRMQARFRRKGEKKPELVHTLNGSGLAVGRTMVAILENNQEADGRIAIPTVLQPYMGGVTHIG.

242–244 is a binding site for L-serine; that stretch reads TAE. Residue 273–275 participates in ATP binding; that stretch reads RSE. Position 296 (Glu296) interacts with L-serine. Residue 360-363 coordinates ATP; that stretch reads EISS. L-serine is bound at residue Ser396.

It belongs to the class-II aminoacyl-tRNA synthetase family. Type-1 seryl-tRNA synthetase subfamily. In terms of assembly, homodimer. The tRNA molecule binds across the dimer.

It localises to the cytoplasm. The enzyme catalyses tRNA(Ser) + L-serine + ATP = L-seryl-tRNA(Ser) + AMP + diphosphate + H(+). The catalysed reaction is tRNA(Sec) + L-serine + ATP = L-seryl-tRNA(Sec) + AMP + diphosphate + H(+). The protein operates within aminoacyl-tRNA biosynthesis; selenocysteinyl-tRNA(Sec) biosynthesis; L-seryl-tRNA(Sec) from L-serine and tRNA(Sec): step 1/1. Its function is as follows. Catalyzes the attachment of serine to tRNA(Ser). Is also able to aminoacylate tRNA(Sec) with serine, to form the misacylated tRNA L-seryl-tRNA(Sec), which will be further converted into selenocysteinyl-tRNA(Sec). The protein is Serine--tRNA ligase of Vibrio atlanticus (strain LGP32) (Vibrio splendidus (strain Mel32)).